The sequence spans 544 residues: MAKQLLFNEEARKKLLSGVEQISSAVKVTLGPKGRNVLLEKGYGAPTVTKDGVSVAKEVELEDPFENMGAQLLKEVATKTNDVAGDGTTTATVLAYSMVREGLKAVAAGMTPLELKRGMDKAVAIAVDDIKQNSKGIKSNEEVAHVASVSANNDKEIGRILASAIEKVGNDGVIDVDEAQTMETVTEFVEGMQFDRGYISSYFVTDRDRMETVYENPYILIYDKSISTMKDLLPLLEKIAQTGRPLLIIAEDVEGEALATLVVNSLRGTLKTCAVKAPGFGDRRKEMLEDIAILSGGQVISEDLGLKLESADIALLGQAKSVKVDKENTTIIDGSGKSKDIKDRIEQIKKQIEASTSDYDSEKLKERLAKLSGGVAVIKIGAVTEVEMKEKKHRVEDALNATRAAIEEGIVAGGGLALIQAAAALEKADLSGLTPDEAVGFKIVRRALEEPIRQISENAGIDGAVVAEKAKEKRGIGFDASKMEWVDMIKVGIIDPAKVTRSALQNAASVSGLLLTTECAIAAIPEKSSSTPPAPDMGGMGGMY.

ATP is bound by residues 29–32 (TLGP), K50, 86–90 (DGTTT), G414, and D495.

This sequence belongs to the chaperonin (HSP60) family. Forms a cylinder of 14 subunits composed of two heptameric rings stacked back-to-back. Interacts with the co-chaperonin GroES.

It is found in the cytoplasm. It catalyses the reaction ATP + H2O + a folded polypeptide = ADP + phosphate + an unfolded polypeptide.. Its function is as follows. Together with its co-chaperonin GroES, plays an essential role in assisting protein folding. The GroEL-GroES system forms a nano-cage that allows encapsulation of the non-native substrate proteins and provides a physical environment optimized to promote and accelerate protein folding. The sequence is that of Chaperonin GroEL from Treponema pallidum subsp. pallidum (strain SS14).